We begin with the raw amino-acid sequence, 451 residues long: Tubulin alpha-2 chain (451 aa).

Residues Q12, D73, S142, G146, T147, T181, N208, and N230 each coordinate GTP. Residue D73 coordinates Mg(2+). The active site involves E256.

Belongs to the tubulin family. In terms of assembly, dimer of alpha and beta chains. A typical microtubule is a hollow water-filled tube with an outer diameter of 25 nm and an inner diameter of 15 nM. Alpha-beta heterodimers associate head-to-tail to form protofilaments running lengthwise along the microtubule wall with the beta-tubulin subunit facing the microtubule plus end conferring a structural polarity. Microtubules usually have 13 protofilaments but different protofilament numbers can be found in some organisms and specialized cells. Mg(2+) is required as a cofactor.

It is found in the cytoplasm. The protein localises to the cytoskeleton. The enzyme catalyses GTP + H2O = GDP + phosphate + H(+). Tubulin is the major constituent of microtubules, a cylinder consisting of laterally associated linear protofilaments composed of alpha- and beta-tubulin heterodimers. Microtubules grow by the addition of GTP-tubulin dimers to the microtubule end, where a stabilizing cap forms. Below the cap, tubulin dimers are in GDP-bound state, owing to GTPase activity of alpha-tubulin. The chain is Tubulin alpha-2 chain (tubB) from Emericella nidulans (strain FGSC A4 / ATCC 38163 / CBS 112.46 / NRRL 194 / M139) (Aspergillus nidulans).